The chain runs to 179 residues: Monothiol glutaredoxin-S12, chloroplastic (179 aa).

A chloroplast-targeting transit peptide spans 1–61 (MVAATVNLAN…WPPLRCSSVK (61 aa)). Residue Ala62 is modified to N-acetylalanine. In terms of domain architecture, Glutaredoxin spans 75 to 176 (EETVKTTVAE…AILAEANGKN (102 aa)). Cys95 lines the [2Fe-2S] cluster pocket.

The protein belongs to the glutaredoxin family. CPYC subfamily.

It is found in the plastid. The protein localises to the chloroplast. Functionally, may only reduce GSH-thiol disulfides, but not protein disulfides. In Arabidopsis thaliana (Mouse-ear cress), this protein is Monothiol glutaredoxin-S12, chloroplastic (GRXS12).